Consider the following 657-residue polypeptide: Threonine--tRNA ligase (657 aa).

One can recognise a TGS domain in the interval 1 to 62 (MALDITFPDG…AHSGQLQIMT (62 aa)). A catalytic region spans residues 240 to 538 (DHRVIGRDLD…LTEIYKGAFP (299 aa)). Cysteine 334, histidine 385, and histidine 515 together coordinate Zn(2+).

Belongs to the class-II aminoacyl-tRNA synthetase family. In terms of assembly, homodimer. Zn(2+) is required as a cofactor.

The protein resides in the cytoplasm. It catalyses the reaction tRNA(Thr) + L-threonine + ATP = L-threonyl-tRNA(Thr) + AMP + diphosphate + H(+). Catalyzes the attachment of threonine to tRNA(Thr) in a two-step reaction: L-threonine is first activated by ATP to form Thr-AMP and then transferred to the acceptor end of tRNA(Thr). Also edits incorrectly charged L-seryl-tRNA(Thr). In Lacticaseibacillus paracasei (strain ATCC 334 / BCRC 17002 / CCUG 31169 / CIP 107868 / KCTC 3260 / NRRL B-441) (Lactobacillus paracasei), this protein is Threonine--tRNA ligase.